Consider the following 504-residue polypeptide: Arabinose import ATP-binding protein AraG (504 aa).

2 consecutive ABC transporter domains span residues 8–243 and 256–499; these read LSFR…MVGR and YGEE…MPKV. 40-47 contributes to the ATP binding site; the sequence is GENGAGKS.

Belongs to the ABC transporter superfamily. Arabinose importer (TC 3.A.1.2.2) family. In terms of assembly, the complex is composed of two ATP-binding proteins (AraG), two transmembrane proteins (AraH) and a solute-binding protein (AraF).

It localises to the cell inner membrane. It carries out the reaction L-arabinose(out) + ATP + H2O = L-arabinose(in) + ADP + phosphate + H(+). Functionally, part of the ABC transporter complex AraFGH involved in arabinose import. Responsible for energy coupling to the transport system. The chain is Arabinose import ATP-binding protein AraG from Escherichia coli (strain UTI89 / UPEC).